A 23-amino-acid chain; its full sequence is Septenin 2 (23 aa).

In terms of tissue distribution, expressed in skin glands.

It localises to the secreted. In terms of biological role, may act as an antimicrobial peptide. In Osteopilus septentrionalis (Cuban treefrog), this protein is Septenin 2.